The following is a 672-amino-acid chain: MGIKGLIGFLSDAAPGCISEVTLESLSGTSIAIDASTALYQFTIAIREGSYLSSLTNSKGESTSHIAGLLNRCIRLLELGIRPVFVFDSTPPEAKSQTLAKRKLLREEAESSLEKAIEEDDKEAIRKYVGRTVRITQKENESAKKLLRLVGVPVIEAAEEAEAQCAYLCQRGFVTAVGSEDADALVFRCGVLLKNLTASNKPVVRVDLAKALELLELTHEQFTDFCILCGCDYCGTLKGVGPKTAYNLIKKHGSISRILEVRSETLEGYEAAQEYFRDPKVRDITTIDRCEANIDGLREFLISENDFSEERVDKLIERLQKARSKKTQLSLKSFFGYPPRAANITRNYTVPIKGVSPPAVVESAVDSTSDDGKDEVPSDDKVPSVNEVPTVDKVPSVNEVPTVEEAPPADAVPTVEDTSEPPSEEPDAKKRNKRVPIEVDDSLVPDNLKRFICVQHYDPRVTIKRTGASELGSDSVDSLVSHICGVYGIQSGTPDNDLSVVGEGILWPNPILQRFRSVTKDLPNSRLHELWRCSSSHGISWDALDKLYINFREARDSSVEEWDKYAPEIVDFASKVARDKITQWLDGSTSCPPRLLRRWTHLLYSRWRERYLHVYGPRMLSRYLKGEVTDRVLVREINECLPAGVECSELPLDTEPSEHNPHFVRRVPKSGS.

Residues 1–106 (MGIKGLIGFL…QTLAKRKLLR (106 aa)) form an N-domain region. D34 is a Mg(2+) binding site. R47 and R72 together coordinate DNA. Residues D88, E160, E162, D181, and D183 each contribute to the Mg(2+) site. Residues 124-252 (AIRKYVGRTV…KTAYNLIKKH (129 aa)) are I-domain. E160 serves as a coordination point for DNA. DNA contacts are provided by G230 and D232. D232 contacts Mg(2+). Positions 327–335 (TQLSLKSFF) are interaction with PCNA. Positions 361 to 436 (VESAVDSTSD…DAKKRNKRVP (76 aa)) are disordered. Residues 370 to 382 (DDGKDEVPSDDKV) show a composition bias toward basic and acidic residues.

The protein belongs to the XPG/RAD2 endonuclease family. FEN1 subfamily. In terms of assembly, interacts with PCNA. Three molecules of FEN1 bind to one PCNA trimer with each molecule binding to one PCNA monomer. PCNA stimulates the nuclease activity without altering cleavage specificity. Mg(2+) is required as a cofactor. Phosphorylated. Phosphorylation upon DNA damage induces relocalization to the nuclear plasma.

The protein localises to the nucleus. Its subcellular location is the nucleolus. It localises to the nucleoplasm. The protein resides in the mitochondrion. Functionally, structure-specific nuclease with 5'-flap endonuclease and 5'-3' exonuclease activities involved in DNA replication and repair. During DNA replication, cleaves the 5'-overhanging flap structure that is generated by displacement synthesis when DNA polymerase encounters the 5'-end of a downstream Okazaki fragment. It enters the flap from the 5'-end and then tracks to cleave the flap base, leaving a nick for ligation. Also involved in the long patch base excision repair (LP-BER) pathway, by cleaving within the apurinic/apyrimidinic (AP) site-terminated flap. Acts as a genome stabilization factor that prevents flaps from equilibrating into structures that lead to duplications and deletions. Also possesses 5'-3' exonuclease activity on nicked or gapped double-stranded DNA, and exhibits RNase H activity. Also involved in replication and repair of rDNA and in repairing mitochondrial DNA. The polypeptide is Flap endonuclease 1 (Babesia bovis).